We begin with the raw amino-acid sequence, 142 residues long: Large ribosomal subunit protein uL13 (142 aa).

The protein belongs to the universal ribosomal protein uL13 family. In terms of assembly, part of the 50S ribosomal subunit.

Functionally, this protein is one of the early assembly proteins of the 50S ribosomal subunit, although it is not seen to bind rRNA by itself. It is important during the early stages of 50S assembly. The sequence is that of Large ribosomal subunit protein uL13 from Vibrio campbellii (strain ATCC BAA-1116).